A 98-amino-acid chain; its full sequence is NADH-ubiquinone oxidoreductase chain 4L (98 aa).

3 consecutive transmembrane segments (helical) span residues 1–21, 29–49, and 61–81; these read MSMV…GMLV, SLLC…VTIL, and IILL…LVMV.

It belongs to the complex I subunit 4L family. Core subunit of respiratory chain NADH dehydrogenase (Complex I) which is composed of 45 different subunits.

The protein resides in the mitochondrion inner membrane. It catalyses the reaction a ubiquinone + NADH + 5 H(+)(in) = a ubiquinol + NAD(+) + 4 H(+)(out). Functionally, core subunit of the mitochondrial membrane respiratory chain NADH dehydrogenase (Complex I) which catalyzes electron transfer from NADH through the respiratory chain, using ubiquinone as an electron acceptor. Part of the enzyme membrane arm which is embedded in the lipid bilayer and involved in proton translocation. This chain is NADH-ubiquinone oxidoreductase chain 4L (MT-ND4L), found in Odobenus rosmarus rosmarus (Atlantic walrus).